The sequence spans 128 residues: Riboflavin kinase (128 aa).

12-17 serves as a coordination point for CDP; the sequence is GKGEGK. Residues threonine 41 and asparagine 43 each coordinate Mg(2+). Positions 97 and 105 each coordinate FMN. 110-113 lines the CDP pocket; sequence IKLR.

It belongs to the archaeal riboflavin kinase family. Mg(2+) is required as a cofactor.

The enzyme catalyses riboflavin + CTP = CDP + FMN + H(+). Its pathway is cofactor biosynthesis; FMN biosynthesis; FMN from riboflavin (CTP route): step 1/1. Its function is as follows. Catalyzes the CTP-dependent phosphorylation of riboflavin (vitamin B2) to form flavin mononucleotide (FMN). This chain is Riboflavin kinase, found in Methanococcus aeolicus (strain ATCC BAA-1280 / DSM 17508 / OCM 812 / Nankai-3).